The primary structure comprises 542 residues: CTP synthase (542 aa).

The interval 1-265 (MTRYIFVTGG…DDFVVERFGL (265 aa)) is amidoligase domain. Ser-13 contacts CTP. Ser-13 serves as a coordination point for UTP. ATP contacts are provided by residues 14–19 (SLGKGI) and Asp-71. Residues Asp-71 and Glu-139 each contribute to the Mg(2+) site. Residues 146–148 (DIE), 186–191 (KTKPTQ), and Lys-222 contribute to the CTP site. UTP-binding positions include 186–191 (KTKPTQ) and Lys-222. A Glutamine amidotransferase type-1 domain is found at 290 to 541 (TIAMVGKYME…VKAALAQKNK (252 aa)). Gly-351 contacts L-glutamine. The Nucleophile; for glutamine hydrolysis role is filled by Cys-378. L-glutamine contacts are provided by residues 379 to 382 (LGMQ), Glu-402, and Arg-469. Residues His-514 and Glu-516 contribute to the active site.

This sequence belongs to the CTP synthase family. In terms of assembly, homotetramer.

It carries out the reaction UTP + L-glutamine + ATP + H2O = CTP + L-glutamate + ADP + phosphate + 2 H(+). It catalyses the reaction L-glutamine + H2O = L-glutamate + NH4(+). The catalysed reaction is UTP + NH4(+) + ATP = CTP + ADP + phosphate + 2 H(+). Its pathway is pyrimidine metabolism; CTP biosynthesis via de novo pathway; CTP from UDP: step 2/2. With respect to regulation, allosterically activated by GTP, when glutamine is the substrate; GTP has no effect on the reaction when ammonia is the substrate. The allosteric effector GTP functions by stabilizing the protein conformation that binds the tetrahedral intermediate(s) formed during glutamine hydrolysis. Inhibited by the product CTP, via allosteric rather than competitive inhibition. In terms of biological role, catalyzes the ATP-dependent amination of UTP to CTP with either L-glutamine or ammonia as the source of nitrogen. Regulates intracellular CTP levels through interactions with the four ribonucleotide triphosphates. The protein is CTP synthase of Pseudomonas putida (strain ATCC 700007 / DSM 6899 / JCM 31910 / BCRC 17059 / LMG 24140 / F1).